A 339-amino-acid chain; its full sequence is Dihydroorotase (339 aa).

Zn(2+) is bound by residues His-12 and His-14. Residues 14–16 and Asn-40 contribute to the substrate site; that span reads HVR. Lys-94, His-133, His-167, and Asp-239 together coordinate Zn(2+). Lys-94 carries the post-translational modification N6-carboxylysine. His-133 contributes to the substrate binding site. Asp-239 is an active-site residue. Substrate is bound by residues His-243 and Ala-255.

The protein belongs to the metallo-dependent hydrolases superfamily. DHOase family. Class II DHOase subfamily. As to quaternary structure, homodimer. Requires Zn(2+) as cofactor.

It catalyses the reaction (S)-dihydroorotate + H2O = N-carbamoyl-L-aspartate + H(+). It functions in the pathway pyrimidine metabolism; UMP biosynthesis via de novo pathway; (S)-dihydroorotate from bicarbonate: step 3/3. Its function is as follows. Catalyzes the reversible cyclization of carbamoyl aspartate to dihydroorotate. The polypeptide is Dihydroorotase (Helicobacter acinonychis (strain Sheeba)).